The chain runs to 378 residues: Spermidine/putrescine import ATP-binding protein PotA (378 aa).

Positions V18–I248 constitute an ABC transporter domain. G50–T57 provides a ligand contact to ATP.

This sequence belongs to the ABC transporter superfamily. Spermidine/putrescine importer (TC 3.A.1.11.1) family. In terms of assembly, the complex is composed of two ATP-binding proteins (PotA), two transmembrane proteins (PotB and PotC) and a solute-binding protein (PotD).

It is found in the cell inner membrane. The catalysed reaction is ATP + H2O + polyamine-[polyamine-binding protein]Side 1 = ADP + phosphate + polyamineSide 2 + [polyamine-binding protein]Side 1.. Part of the ABC transporter complex PotABCD involved in spermidine/putrescine import. Responsible for energy coupling to the transport system. The sequence is that of Spermidine/putrescine import ATP-binding protein PotA from Salmonella choleraesuis (strain SC-B67).